Reading from the N-terminus, the 357-residue chain is Spore coat protein I (357 aa).

Belongs to the CotS family.

The protein localises to the spore coat. The chain is Spore coat protein I (cotI) from Bacillus subtilis (strain 168).